Here is a 311-residue protein sequence, read N- to C-terminus: Fluoride export protein 1 (311 aa).

Residues 1–6 (MLLTQS) lie on the Cytoplasmic side of the membrane. A helical membrane pass occupies residues 7 to 25 (YFCIMSMLGTLARLGLTAL). At 26–29 (NTYP) the chain is on the extracellular side. The helical transmembrane segment at 30-50 (GAPFSGLLWVQFVGCVIMGFC) threads the bilayer. Residues 51-65 (QTESVFFPRPKHNAT) lie on the Cytoplasmic side of the membrane. A helical membrane pass occupies residues 66–86 (FLLAITTGFCGSLTTFSSWML). The Extracellular segment spans residues 87–106 (QMFTGMANLDPFERRGRGYS). A helical transmembrane segment spans residues 107 to 127 (FLSVVSDFMVTMCIAMSSLIW). At 128 to 154 (GKQIGKTTGQWRIGKVAFAWPIPAHTH) the chain is on the cytoplasmic side. A helical transmembrane segment spans residues 155–175 (IVVRVLLLLLSICFFVGAAFY). Over 176-186 (TAYTTNVTHRG) the chain is Extracellular. N-linked (GlcNAc...) asparagine glycosylation occurs at Asn-181. The helical transmembrane segment at 187–207 (IGFSLIFSPFAALTRLYLARF) threads the bilayer. Residues 208–212 (LNSPQ) lie on the Cytoplasmic side of the membrane. The chain crosses the membrane as a helical span at residues 213–233 (YFIPYGTLCANVFATLLLSIM). Over 234 to 250 (YMIPQITHCTPVSRSVM) the chain is Extracellular. The chain crosses the membrane as a helical span at residues 251–268 (YGIQNGFCAVLSTLSTFS). The Cytoplasmic portion of the chain corresponds to 269–278 (NELHTMPIKR). The helical transmembrane segment at 279–299 (AYIYCIISVAISFSICVIVDG) threads the bilayer. Over 300-311 (ATAWGHGYTEKY) the chain is Extracellular.

It belongs to the fluoride channel Fluc/FEX (TC 1.A.43) family.

It localises to the cell membrane. The enzyme catalyses fluoride(in) = fluoride(out). In terms of biological role, fluoride channel required for the rapid expulsion of cytoplasmic fluoride. The protein is Fluoride export protein 1 (fex1) of Schizosaccharomyces pombe (strain 972 / ATCC 24843) (Fission yeast).